The sequence spans 291 residues: 4-hydroxy-tetrahydrodipicolinate synthase (291 aa).

T45 is a binding site for pyruvate. Catalysis depends on Y133, which acts as the Proton donor/acceptor. Residue K161 is the Schiff-base intermediate with substrate of the active site. I203 provides a ligand contact to pyruvate.

Belongs to the DapA family. In terms of assembly, homotetramer; dimer of dimers.

The protein localises to the cytoplasm. It catalyses the reaction L-aspartate 4-semialdehyde + pyruvate = (2S,4S)-4-hydroxy-2,3,4,5-tetrahydrodipicolinate + H2O + H(+). Its pathway is amino-acid biosynthesis; L-lysine biosynthesis via DAP pathway; (S)-tetrahydrodipicolinate from L-aspartate: step 3/4. Functionally, catalyzes the condensation of (S)-aspartate-beta-semialdehyde [(S)-ASA] and pyruvate to 4-hydroxy-tetrahydrodipicolinate (HTPA). This Teredinibacter turnerae (strain ATCC 39867 / T7901) protein is 4-hydroxy-tetrahydrodipicolinate synthase.